The sequence spans 254 residues: MKIGVYGASGRIGKLLLEELKGGYKGLALSSVFVRQKCETDFSHFSHSPLVTNDLKAFVRACECVIDFSLPKGLDHLLEALLECPKILVSGTTGLEKETLEKMQQLALRVPLLHAHNMSLGIMMFNQLAFLASLKLKDADIEIVETHHNLKKDAPSGTALSLYETCAKARGYDEKNALTTHREGLRSKESIGIAALRGGDVAGKHTIGFYLEGEYIELSHTATNRSIFAKGALEVALWLKDKAAKKYEINEMFG.

7 to 12 (GASGRI) lines the NAD(+) pocket. NADP(+) is bound at residue Arg-35. NAD(+) is bound by residues 91–93 (GTT) and 115–118 (AHNM). The Proton donor/acceptor role is filled by His-147. (S)-2,3,4,5-tetrahydrodipicolinate is bound at residue His-148. Catalysis depends on Lys-151, which acts as the Proton donor. 157–158 (GT) contacts (S)-2,3,4,5-tetrahydrodipicolinate.

This sequence belongs to the DapB family.

The protein localises to the cytoplasm. The catalysed reaction is (S)-2,3,4,5-tetrahydrodipicolinate + NAD(+) + H2O = (2S,4S)-4-hydroxy-2,3,4,5-tetrahydrodipicolinate + NADH + H(+). The enzyme catalyses (S)-2,3,4,5-tetrahydrodipicolinate + NADP(+) + H2O = (2S,4S)-4-hydroxy-2,3,4,5-tetrahydrodipicolinate + NADPH + H(+). The protein operates within amino-acid biosynthesis; L-lysine biosynthesis via DAP pathway; (S)-tetrahydrodipicolinate from L-aspartate: step 4/4. Functionally, catalyzes the conversion of 4-hydroxy-tetrahydrodipicolinate (HTPA) to tetrahydrodipicolinate. This is 4-hydroxy-tetrahydrodipicolinate reductase from Helicobacter pylori (strain HPAG1).